Reading from the N-terminus, the 137-residue chain is Proofreading thioesterase EntH (137 aa).

E63 functions as the Nucleophile or proton acceptor in the catalytic mechanism.

This sequence belongs to the thioesterase PaaI family. Homotetramer. Dimer of dimers. Interacts specifically with the aryl carrier protein (ArCP) domain of EntB.

The protein localises to the cytoplasm. The protein operates within siderophore biosynthesis; enterobactin biosynthesis. Functionally, required for optimal enterobactin synthesis. Acts as a proofreading enzyme that prevents EntB misacylation by hydrolyzing the thioester bound existing between EntB and wrongly charged molecules. The sequence is that of Proofreading thioesterase EntH from Shigella sonnei (strain Ss046).